A 249-amino-acid chain; its full sequence is Metallo-beta-lactamase type 2 (249 aa).

The signal sequence occupies residues 1 to 22 (MLKKIKISLILALGLTSLQAFG). Residues H98, H100, D102, H161, and C180 each coordinate Zn(2+). Residue K183 participates in substrate binding. H222 contacts Zn(2+).

This sequence belongs to the metallo-beta-lactamase superfamily. Class-B beta-lactamase family. Monomer. It depends on Zn(2+) as a cofactor.

The protein resides in the periplasm. It carries out the reaction a beta-lactam + H2O = a substituted beta-amino acid. Its activity is regulated as follows. Inhibited by chelating agents such as EDTA, 1-10 phenanthroline and pyridine-2,6-dicarboxylic acid. In terms of biological role, confers resistance to the different beta-lactams antibiotics (penicillin, cephalosporin and carbapenem) via the hydrolysis of the beta-lactam ring. The polypeptide is Metallo-beta-lactamase type 2 (blaB1) (Elizabethkingia meningoseptica (Chryseobacterium meningosepticum)).